We begin with the raw amino-acid sequence, 336 residues long: Mitochondrial amidoxime reducing component 2 (336 aa).

Residues 1 to 35 (MGAAGSSALARLGLPALPGPRWLGVAALGLAAVAL) constitute a mitochondrion transit peptide. Residues lysine 138, lysine 144, lysine 173, lysine 187, lysine 287, and lysine 294 each participate in a glycyl lysine isopeptide (Lys-Gly) (interchain with G-Cter in ubiquitin) cross-link. The 147-residue stretch at 188 to 334 (ARASNEIFPS…LKVGDPVYQM (147 aa)) folds into the MOSC domain.

In terms of assembly, component of a complex composed of cytochrome b5, NADH-cytochrome b5 reductase (CYB5R3) and MTARC2. Requires Mo-molybdopterin as cofactor. Post-translationally, ubiquitinated by PRKN during mitophagy, leading to its degradation and enhancement of mitophagy. Deubiquitinated by USP30.

It is found in the mitochondrion outer membrane. Its subcellular location is the peroxisome. It catalyses the reaction N(omega)-hydroxy-L-arginine + 2 Fe(II)-[cytochrome b5] + 2 H(+) = L-arginine + 2 Fe(III)-[cytochrome b5] + H2O. Catalyzes the reduction of N-oxygenated molecules, acting as a counterpart of cytochrome P450 and flavin-containing monooxygenases in metabolic cycles. As a component of prodrug-converting system, reduces a multitude of N-hydroxylated prodrugs particularly amidoximes, leading to increased drug bioavailability. May be involved in mitochondrial N(omega)-hydroxy-L-arginine (NOHA) reduction, regulating endogenous nitric oxide levels and biosynthesis. Postulated to cleave the N-OH bond of N-hydroxylated substrates in concert with electron transfer from NADH to cytochrome b5 reductase then to cytochrome b5, the ultimate electron donor that primes the active site for substrate reduction. This chain is Mitochondrial amidoxime reducing component 2 (MTARC2), found in Bos taurus (Bovine).